A 127-amino-acid chain; its full sequence is MAFTGKYQLESHENFEAFMKAVGVPDDEVEKGKDIKSISEIHQDGKDFKVTVTAGTKVILYSFTVGEECELETFTGDRAKTVVQMDGNKLTAFVKGIESVTELDGDTISNTLSFNGIVYKRISRRIS.

Belongs to the calycin superfamily. Fatty-acid binding protein (FABP) family. In adults, weakly expressed in the intestine.

The protein localises to the cytoplasm. Its function is as follows. Binds free fatty acids and their coenzyme A derivatives, bilirubin, and some other small molecules in the cytoplasm. May be involved in intracellular lipid transport. The chain is Fatty acid binding protein 1-A, liver from Danio rerio (Zebrafish).